A 129-amino-acid polypeptide reads, in one-letter code: Probable protein cornichon homolog 2 (129 aa).

The next 2 helical transmembrane spans lie at 45 to 65 (FIVQ…FMTL) and 105 to 125 (LAYI…SALD).

The protein belongs to the cornichon family.

The protein resides in the membrane. In Arabidopsis thaliana (Mouse-ear cress), this protein is Probable protein cornichon homolog 2.